The sequence spans 554 residues: Tetratricopeptide repeat protein 34 (554 aa).

TPR repeat units follow at residues 38-71 (ETSC…RPQA), 166-199 (SESL…EPGN), 200-233 (VKAL…DPGT), 294-327 (PSWR…TPSS), 328-361 (EAAQ…DTQD), 411-445 (NPYH…PAED), 452-485 (SEDF…APAQ), and 500-533 (ASVF…DPSH).

The chain is Tetratricopeptide repeat protein 34 (Ttc34) from Mus musculus (Mouse).